Here is a 323-residue protein sequence, read N- to C-terminus: Zinc finger C2HC domain-containing protein 1A (323 aa).

The C2HC/C3H-type 1 zinc finger occupies 7-36; that stretch reads ELRPCKICGRTFFPATLKKHVPICQKTSVK. The Zn(2+) site is built by cysteine 11, cysteine 14, histidine 26, and cysteine 30. Residues 35–75 form a disordered region; sequence VKKRKTFESSRQRAEGTDINTVKPVKPRPEPPKKQSNWKRK. Over residues 40–50 the composition is skewed to basic and acidic residues; the sequence is TFESSRQRAEG. The C2HC/C3H-type 2 zinc finger occupies 110-139; that stretch reads DYVQCPYCQRRFNQNAADRHINFCKEQSAR. Zn(2+) is bound by residues cysteine 114, cysteine 117, histidine 129, and cysteine 133. A disordered region spans residues 138 to 273; the sequence is ARMGQKIKGG…EAAMGYDSSD (136 aa). A compositionally biased stretch (polar residues) spans 208 to 226; that stretch reads KYQTQSPAHKNSTMVTSPQ.

Belongs to the ZC2HC1 family. Zn(2+) serves as cofactor.

This is Zinc finger C2HC domain-containing protein 1A (zc2hc1a) from Xenopus laevis (African clawed frog).